We begin with the raw amino-acid sequence, 121 residues long: Prefoldin subunit beta (121 aa).

This sequence belongs to the prefoldin subunit beta family. In terms of assembly, heterohexamer of two alpha and four beta subunits.

It is found in the cytoplasm. Its function is as follows. Molecular chaperone capable of stabilizing a range of proteins. Seems to fulfill an ATP-independent, HSP70-like function in archaeal de novo protein folding. The polypeptide is Prefoldin subunit beta (Caldivirga maquilingensis (strain ATCC 700844 / DSM 13496 / JCM 10307 / IC-167)).